The primary structure comprises 888 residues: Molybdenum cofactor sulfurase (888 aa).

Phosphoserine is present on serine 34. Lysine 264 is modified (N6-(pyridoxal phosphate)lysine). Cysteine 424 is an active-site residue. 2 positions are modified to phosphoserine: serine 528 and serine 530. The 162-residue stretch at 706–867 (KQSSNSQRNA…LSVGSQVLPV (162 aa)) folds into the MOSC domain.

It belongs to the class-V pyridoxal-phosphate-dependent aminotransferase family. MOCOS subfamily. Pyridoxal 5'-phosphate serves as cofactor.

The enzyme catalyses Mo-molybdopterin + L-cysteine + AH2 = thio-Mo-molybdopterin + L-alanine + A + H2O. It functions in the pathway cofactor biosynthesis; molybdopterin biosynthesis. Functionally, sulfurates the molybdenum cofactor. Sulfation of molybdenum is essential for xanthine dehydrogenase (XDH) and aldehyde oxidase (ADO) enzymes in which molybdenum cofactor is liganded by 1 oxygen and 1 sulfur atom in active form. In vitro, the C-terminal domain is able to reduce N-hydroxylated prodrugs, such as benzamidoxime. This chain is Molybdenum cofactor sulfurase, found in Homo sapiens (Human).